The primary structure comprises 395 residues: Outer membrane protein assembly factor BamB (395 aa).

The signal sequence occupies residues 1 to 20 (MKSWCKNLLAAGLSLAMLSA). Cys21 is lipidated: N-palmitoyl cysteine. The S-diacylglycerol cysteine moiety is linked to residue Cys21.

The protein belongs to the BamB family. As to quaternary structure, part of the Bam complex.

It is found in the cell outer membrane. Its function is as follows. Part of the outer membrane protein assembly complex, which is involved in assembly and insertion of beta-barrel proteins into the outer membrane. The sequence is that of Outer membrane protein assembly factor BamB from Shewanella oneidensis (strain ATCC 700550 / JCM 31522 / CIP 106686 / LMG 19005 / NCIMB 14063 / MR-1).